Reading from the N-terminus, the 175-residue chain is Apoptosis regulatory protein Siva (175 aa).

Tyr-34 bears the Phosphotyrosine; by ABL2 mark. Positions 36–55 are interaction with BCL2L1 isoform Bcl-x(L) and inhibition of BCL2L1 anti-apoptotic activity; sequence QEVFEKTKRLLFLGAQAYLD. Ser-70 carries the phosphoserine modification. Residues 105 to 123 form an interaction with coxsackievirus B3 VP2 region; the sequence is DPSGVASIACSSCVRAVDG.

As to quaternary structure, binds through its N-terminal region to the C-terminus of CD27 and to PXMP2/PMP22. Binds to the C-terminus of TNFRSF18/GITR. Isoform 1 binds to BCL2L1/BCLX isoform Bcl-x(L) but not to BAX. (Microbial infection) Interacts with coxsackievirus B3 capsid protein VP2; this interaction inhibits the binding of SIVA1 to CD27. Zn(2+) serves as cofactor. Post-translationally, phosphorylated by ABL2/ARG in response to oxidative stress. As to expression, ubiquitous. Mostly expressed in thymus, testis, ovary, prostate, small intestine and spleen and less in colon.

Its subcellular location is the cytoplasm. The protein localises to the nucleus. Functionally, induces CD27-mediated apoptosis. Inhibits BCL2L1 isoform Bcl-x(L) anti-apoptotic activity. Inhibits activation of NF-kappa-B and promotes T-cell receptor-mediated apoptosis. The sequence is that of Apoptosis regulatory protein Siva (SIVA1) from Homo sapiens (Human).